A 271-amino-acid polypeptide reads, in one-letter code: MEALPLLAATTPDHGRHRRLLLLPLLLFLLPAGAVQGWETEERPRTREEECHFYAGGQVYPGEASRVSVADHSLHLSKAKISKPAPYWEGTAVIDGEFKELKLTDYRGKYLVFFFYPLDFTFVCPTEIIAFGDRLEEFRSINTEVVACSVDSQFTHLAWINTPRRQGGLGPIRIPLLSDLTHQISKDYGVYLEDSGHTLRGLFIIDDKGILRQITLNDLPVGRSVDETLRLVQAFQYTDKHGEVCPAGWKPGSETIIPDPAGKLKYFDKLN.

Residues M1 to G37 form the signal peptide. The 159-residue stretch at A79 to Y237 folds into the Thioredoxin domain. C124 functions as the Cysteine sulfenic acid (-SOH) intermediate in the catalytic mechanism.

The protein belongs to the peroxiredoxin family. AhpC/Prx1 subfamily. As to quaternary structure, homodimer; disulfide-linked, upon oxidation. 5 homodimers assemble to form a ring-like decamer. Can form heterodimers with PRDX1. The enzyme can be inactivated by further oxidation of the cysteine sulfenic acid (C(P)-SOH) to sulphinic acid (C(P)-SO2H) and sulphonic acid (C(P)-SO3H) instead of its condensation to a disulfide bond.

It localises to the cytoplasm. It is found in the endoplasmic reticulum. The enzyme catalyses a hydroperoxide + [thioredoxin]-dithiol = an alcohol + [thioredoxin]-disulfide + H2O. Functionally, thiol-specific peroxidase that catalyzes the reduction of hydrogen peroxide and organic hydroperoxides to water and alcohols, respectively. Plays a role in cell protection against oxidative stress by detoxifying peroxides and as sensor of hydrogen peroxide-mediated signaling events. Regulates the activation of NF-kappa-B in the cytosol by a modulation of I-kappa-B-alpha phosphorylation. The sequence is that of Peroxiredoxin-4 (PRDX4) from Homo sapiens (Human).